The sequence spans 396 residues: Tryptophan synthase beta chain (396 aa).

Lys88 is subject to N6-(pyridoxal phosphate)lysine.

Belongs to the TrpB family. In terms of assembly, tetramer of two alpha and two beta chains. Pyridoxal 5'-phosphate is required as a cofactor.

It carries out the reaction (1S,2R)-1-C-(indol-3-yl)glycerol 3-phosphate + L-serine = D-glyceraldehyde 3-phosphate + L-tryptophan + H2O. Its pathway is amino-acid biosynthesis; L-tryptophan biosynthesis; L-tryptophan from chorismate: step 5/5. Functionally, the beta subunit is responsible for the synthesis of L-tryptophan from indole and L-serine. The sequence is that of Tryptophan synthase beta chain from Shewanella baltica (strain OS155 / ATCC BAA-1091).